A 272-amino-acid polypeptide reads, in one-letter code: MRDYKLVVLGAGGVGKSCLTVQFVQGVYLDTYDPTIEDSYRKTIEIDNKVFDLEILDTAGIAQFTAMRELYIKSGMGFLLVYSVTDRQSLEELMELREQVLRIKDSDRVPMVLIGNKADLINERVISVEEGIEVSSKWGRVPFYETSALLRSNVDEVFVDLVRQIIRNEMESVAVKDARNQSQQFSKIESPSTRLPSSAKQDTKQSNNKQSSKGLYNKSSQGQAKVKQSTPVNEKHKPSHAVPKSGSSNRTGISATSQQKKKKKNASTCTIL.

A GTP-binding site is contributed by 10-17 (GAGGVGKS). Residues 32 to 40 (YDPTIEDSY) carry the Effector region motif. Residues 57-61 (DTAGI) and 116-119 (NKAD) each bind GTP. A disordered region spans residues 177–272 (DARNQSQQFS…KKNASTCTIL (96 aa)). 2 stretches are compositionally biased toward polar residues: residues 180–232 (NQSQ…STPV) and 245–258 (SGSS…ATSQ). Cysteine 269 carries the post-translational modification Cysteine methyl ester. Cysteine 269 carries S-geranylgeranyl cysteine lipidation. Residues 270 to 272 (TIL) constitute a propeptide, removed in mature form.

Belongs to the small GTPase superfamily. Ras family.

The protein localises to the cell membrane. It catalyses the reaction GTP + H2O = GDP + phosphate + H(+). Its activity is regulated as follows. Alternates between an inactive form bound to GDP and an active form bound to GTP. Activated by a guanine nucleotide-exchange factor (GEF) and inactivated by a GTPase-activating protein (GAP). Functionally, ras-related protein which binds GDP/GTP and possesses intrinsic GTPase activity. Involved in development of cell polarity during the cell division cycle, and essential for bud emergence. This chain is Ras-related protein RSR1, found in Saccharomyces cerevisiae (strain ATCC 204508 / S288c) (Baker's yeast).